The chain runs to 1365 residues: DNA-directed RNA polymerase subunit beta' (1365 aa).

Residues cysteine 249, cysteine 316, cysteine 323, and cysteine 326 each coordinate Zn(2+).

Belongs to the RNA polymerase beta' chain family. RpoC2 subfamily. In terms of assembly, in cyanobacteria the RNAP catalytic core is composed of 2 alpha, 1 beta, 1 beta', 1 gamma and 1 omega subunit. When a sigma factor is associated with the core the holoenzyme is formed, which can initiate transcription. Requires Zn(2+) as cofactor.

It carries out the reaction RNA(n) + a ribonucleoside 5'-triphosphate = RNA(n+1) + diphosphate. In terms of biological role, DNA-dependent RNA polymerase catalyzes the transcription of DNA into RNA using the four ribonucleoside triphosphates as substrates. The protein is DNA-directed RNA polymerase subunit beta' of Synechococcus sp. (strain CC9311).